A 387-amino-acid polypeptide reads, in one-letter code: 8-amino-7-oxononanoate synthase (387 aa).

A substrate-binding site is contributed by R19. Position 106 to 107 (106 to 107) interacts with pyridoxal 5'-phosphate; sequence GY. Residue H131 participates in substrate binding. Residues S177, H205, and T236 each coordinate pyridoxal 5'-phosphate. Position 239 is an N6-(pyridoxal phosphate)lysine (K239). Residue T353 participates in substrate binding.

The protein belongs to the class-II pyridoxal-phosphate-dependent aminotransferase family. BioF subfamily. In terms of assembly, homodimer. The cofactor is pyridoxal 5'-phosphate.

It catalyses the reaction 6-carboxyhexanoyl-[ACP] + L-alanine + H(+) = (8S)-8-amino-7-oxononanoate + holo-[ACP] + CO2. It functions in the pathway cofactor biosynthesis; biotin biosynthesis. Functionally, catalyzes the decarboxylative condensation of pimeloyl-[acyl-carrier protein] and L-alanine to produce 8-amino-7-oxononanoate (AON), [acyl-carrier protein], and carbon dioxide. The chain is 8-amino-7-oxononanoate synthase from Nitrosomonas europaea (strain ATCC 19718 / CIP 103999 / KCTC 2705 / NBRC 14298).